Reading from the N-terminus, the 583-residue chain is 2-succinyl-5-enolpyruvyl-6-hydroxy-3-cyclohexene-1-carboxylate synthase (583 aa).

The protein belongs to the TPP enzyme family. MenD subfamily. Homodimer. The cofactor is Mg(2+). It depends on Mn(2+) as a cofactor. Requires thiamine diphosphate as cofactor.

The enzyme catalyses isochorismate + 2-oxoglutarate + H(+) = 5-enolpyruvoyl-6-hydroxy-2-succinyl-cyclohex-3-ene-1-carboxylate + CO2. Its pathway is quinol/quinone metabolism; 1,4-dihydroxy-2-naphthoate biosynthesis; 1,4-dihydroxy-2-naphthoate from chorismate: step 2/7. The protein operates within quinol/quinone metabolism; menaquinone biosynthesis. Catalyzes the thiamine diphosphate-dependent decarboxylation of 2-oxoglutarate and the subsequent addition of the resulting succinic semialdehyde-thiamine pyrophosphate anion to isochorismate to yield 2-succinyl-5-enolpyruvyl-6-hydroxy-3-cyclohexene-1-carboxylate (SEPHCHC). This chain is 2-succinyl-5-enolpyruvyl-6-hydroxy-3-cyclohexene-1-carboxylate synthase, found in Chlorobium phaeovibrioides (strain DSM 265 / 1930) (Prosthecochloris vibrioformis (strain DSM 265)).